The following is a 774-amino-acid chain: 5-methyltetrahydropteroyltriglutamate--homocysteine methyltransferase (774 aa).

Residues 15–18 (RELK) and Lys116 contribute to the 5-methyltetrahydropteroyltri-L-glutamate site. L-homocysteine-binding positions include 445-447 (IGS) and Glu498. L-methionine-binding positions include 445–447 (IGS) and Glu498. 5-methyltetrahydropteroyltri-L-glutamate is bound by residues 529-530 (RC) and Trp575. Asp613 is a binding site for L-homocysteine. Asp613 is a binding site for L-methionine. 5-methyltetrahydropteroyltri-L-glutamate is bound at residue Glu619. Residues His655, Cys657, and Glu679 each contribute to the Zn(2+) site. Residue His708 is the Proton donor of the active site. Cys740 lines the Zn(2+) pocket.

It belongs to the vitamin-B12 independent methionine synthase family. It depends on Zn(2+) as a cofactor.

The enzyme catalyses 5-methyltetrahydropteroyltri-L-glutamate + L-homocysteine = tetrahydropteroyltri-L-glutamate + L-methionine. It participates in amino-acid biosynthesis; L-methionine biosynthesis via de novo pathway; L-methionine from L-homocysteine (MetE route): step 1/1. In terms of biological role, catalyzes the transfer of a methyl group from 5-methyltetrahydrofolate to homocysteine resulting in methionine formation. The sequence is that of 5-methyltetrahydropteroyltriglutamate--homocysteine methyltransferase from Flavobacterium johnsoniae (strain ATCC 17061 / DSM 2064 / JCM 8514 / BCRC 14874 / CCUG 350202 / NBRC 14942 / NCIMB 11054 / UW101) (Cytophaga johnsonae).